Consider the following 227-residue polypeptide: Ubiquitin domain-containing protein 1 (227 aa).

The disordered stretch occupies residues 1–36 (MGNCVGRQRRERPTAPGHPRKRAGRNEPLKKERLKW). The segment covering 24–36 (GRNEPLKKERLKW) has biased composition (basic and acidic residues). Residues 149-224 (FPLKVRLSTG…IQVIINQPPP (76 aa)) enclose the Ubiquitin-like domain.

As to quaternary structure, interacts with UBTD1.

May be involved in the regulation of cellular senescence through a positive feedback loop with TP53. Is a TP53 downstream target gene that increases the stability of TP53 protein by promoting the ubiquitination and degradation of MDM2. This chain is Ubiquitin domain-containing protein 1 (UBTD1), found in Bos taurus (Bovine).